Consider the following 63-residue polypeptide: Keratin-associated protein 19-7 (63 aa).

The protein belongs to the KRTAP type 19 family. As to quaternary structure, interacts with hair keratins.

Functionally, in the hair cortex, hair keratin intermediate filaments are embedded in an interfilamentous matrix, consisting of hair keratin-associated proteins (KRTAP), which are essential for the formation of a rigid and resistant hair shaft through their extensive disulfide bond cross-linking with abundant cysteine residues of hair keratins. The matrix proteins include the high-sulfur and high-glycine-tyrosine keratins. The polypeptide is Keratin-associated protein 19-7 (KRTAP19-7) (Homo sapiens (Human)).